Here is an 87-residue protein sequence, read N- to C-terminus: Small ribosomal subunit protein bS20 (87 aa).

Positions 1 to 20 (MANIKSQIKRNKTNEKARLR) are disordered.

Belongs to the bacterial ribosomal protein bS20 family.

Its function is as follows. Binds directly to 16S ribosomal RNA. In Corynebacterium efficiens (strain DSM 44549 / YS-314 / AJ 12310 / JCM 11189 / NBRC 100395), this protein is Small ribosomal subunit protein bS20.